We begin with the raw amino-acid sequence, 146 residues long: uncharacterized protein (146 aa).

This is an uncharacterized protein from Bacillus subtilis (strain 168).